Reading from the N-terminus, the 615-residue chain is Albumin (615 aa).

The signal sequence occupies residues 1 to 18; it reads MKWVTLISFIFLFSSATS. The propeptide occupies 19-23; sequence RNLQR. Albumin domains follow at residues 22–214, 215–407, and 408–605; these read QRFA…IVMR, EKAK…QLNQ, and HIKE…NLIV. Residue H30 participates in Cu cation binding. E33 and D40 together coordinate Ca(2+). Disulfide bonds link C80–C89, C102–C118, C117–C128, C152–C197, C196–C205, C228–C274, and C273–C281. Positions 272, 277, 280, and 283 each coordinate Ca(2+). Residue D277 coordinates Zn(2+). 10 disulfides stabilise this stretch: C293–C307, C306–C317, C344–C389, C388–C397, C420–C466, C465–C476, C489–C505, C504–C515, C542–C587, and C586–C595. The N-linked (GlcNAc...) asparagine glycan is linked to N500.

The protein belongs to the ALB/AFP/VDB family. Plasma.

The protein localises to the secreted. Binds water, Ca(2+), Na(+), K(+), fatty acids, hormones, bilirubin and drugs. Its main function is the regulation of the colloidal osmotic pressure of blood. This chain is Albumin (ALB), found in Gallus gallus (Chicken).